The primary structure comprises 757 residues: Tyrosine-protein kinase HTK16 (757 aa).

The 93-residue stretch at Trp-10–Cys-102 folds into the SH2 1 domain. 5 ANK repeats span residues Gly-115–Ala-147, Ser-151–Ala-180, Asn-184–Lys-214, Asn-219–Pro-248, and Asp-252–Lys-281. The 93-residue stretch at Trp-287–Val-379 folds into the SH2 2 domain. Disordered regions lie at residues Ser-381–Pro-407 and Pro-444–Asp-467. Over residues Glu-455–Asp-467 the composition is skewed to polar residues. The Protein kinase domain occupies Ile-484–Phe-740. ATP contacts are provided by residues Leu-490–Val-498 and Lys-516. Asp-608 acts as the Proton acceptor in catalysis. Tyr-746 bears the Phosphotyrosine mark.

It belongs to the protein kinase superfamily. Tyr protein kinase family. As to expression, epithelial cells.

The enzyme catalyses L-tyrosyl-[protein] + ATP = O-phospho-L-tyrosyl-[protein] + ADP + H(+). In terms of biological role, may be involved in signal transduction. In Hydra vulgaris (Hydra), this protein is Tyrosine-protein kinase HTK16 (HTK16).